The sequence spans 323 residues: Transcription initiation factor IIB 7 (323 aa).

The segment covering 1–16 (MTRSTRQRERETAAKQ) has biased composition (basic and acidic residues). The disordered stretch occupies residues 1–35 (MTRSTRQRERETAAKQEEEEDSEEGVRECPECGSD). The segment at 24–56 (EGVRECPECGSDNLVKSSDRAELVCNDCGLVVE) adopts a TFIIB-type zinc-finger fold. Residues Cys-29, Cys-32, Cys-48, and Cys-51 each contribute to the Zn(2+) site. 2 repeat units span residues 142–225 (SEID…SQEL) and 236–317 (KYVP…EQIE).

Belongs to the TFIIB family.

Stabilizes TBP binding to an archaeal box-A promoter. Also responsible for recruiting RNA polymerase II to the pre-initiation complex (DNA-TBP-TFIIB). In Halobacterium salinarum (strain ATCC 700922 / JCM 11081 / NRC-1) (Halobacterium halobium), this protein is Transcription initiation factor IIB 7.